Consider the following 245-residue polypeptide: uncharacterized protein (245 aa).

6 consecutive transmembrane segments (helical) span residues 38–58 (IYPA…AIFI), 68–88 (TIEL…QGYF), 100–120 (IWSL…LILA), 129–149 (VLFI…FVSA), 194–214 (VNNI…FLMN), and 217–237 (IAFI…LIIH).

It belongs to the acyltransferase 3 family.

The protein resides in the cell membrane. This is an uncharacterized protein from Haemophilus influenzae (strain ATCC 51907 / DSM 11121 / KW20 / Rd).